A 399-amino-acid chain; its full sequence is CCA-adding enzyme (399 aa).

Glycine 28 and arginine 31 together coordinate ATP. CTP is bound by residues glycine 28 and arginine 31. 2 residues coordinate Mg(2+): aspartate 41 and aspartate 43. Residues arginine 112, aspartate 155, arginine 158, arginine 161, and arginine 164 each contribute to the ATP site. CTP is bound by residues arginine 112, aspartate 155, arginine 158, arginine 161, and arginine 164.

The protein belongs to the tRNA nucleotidyltransferase/poly(A) polymerase family. Bacterial CCA-adding enzyme type 3 subfamily. As to quaternary structure, homodimer. It depends on Mg(2+) as a cofactor.

The enzyme catalyses a tRNA precursor + 2 CTP + ATP = a tRNA with a 3' CCA end + 3 diphosphate. It carries out the reaction a tRNA with a 3' CCA end + 2 CTP + ATP = a tRNA with a 3' CCACCA end + 3 diphosphate. In terms of biological role, catalyzes the addition and repair of the essential 3'-terminal CCA sequence in tRNAs without using a nucleic acid template. Adds these three nucleotides in the order of C, C, and A to the tRNA nucleotide-73, using CTP and ATP as substrates and producing inorganic pyrophosphate. tRNA 3'-terminal CCA addition is required both for tRNA processing and repair. Also involved in tRNA surveillance by mediating tandem CCA addition to generate a CCACCA at the 3' terminus of unstable tRNAs. While stable tRNAs receive only 3'-terminal CCA, unstable tRNAs are marked with CCACCA and rapidly degraded. This is CCA-adding enzyme from Staphylococcus saprophyticus subsp. saprophyticus (strain ATCC 15305 / DSM 20229 / NCIMB 8711 / NCTC 7292 / S-41).